Here is a 268-residue protein sequence, read N- to C-terminus: Tryptophan synthase alpha chain (268 aa).

Active-site proton acceptor residues include glutamate 49 and aspartate 60.

This sequence belongs to the TrpA family. As to quaternary structure, tetramer of two alpha and two beta chains.

The enzyme catalyses (1S,2R)-1-C-(indol-3-yl)glycerol 3-phosphate + L-serine = D-glyceraldehyde 3-phosphate + L-tryptophan + H2O. It functions in the pathway amino-acid biosynthesis; L-tryptophan biosynthesis; L-tryptophan from chorismate: step 5/5. The alpha subunit is responsible for the aldol cleavage of indoleglycerol phosphate to indole and glyceraldehyde 3-phosphate. This Dechloromonas aromatica (strain RCB) protein is Tryptophan synthase alpha chain.